The chain runs to 445 residues: N-succinylarginine dihydrolase (445 aa).

Residues 19-28 (AGLSFGNVAS), N110, and 137-138 (HR) contribute to the substrate site. The active site involves E174. R214 provides a ligand contact to substrate. The active site involves H250. The substrate site is built by D252 and N363. Catalysis depends on C369, which acts as the Nucleophile.

It belongs to the succinylarginine dihydrolase family. As to quaternary structure, homodimer.

It catalyses the reaction N(2)-succinyl-L-arginine + 2 H2O + 2 H(+) = N(2)-succinyl-L-ornithine + 2 NH4(+) + CO2. Its pathway is amino-acid degradation; L-arginine degradation via AST pathway; L-glutamate and succinate from L-arginine: step 2/5. Catalyzes the hydrolysis of N(2)-succinylarginine into N(2)-succinylornithine, ammonia and CO(2). In Shewanella pealeana (strain ATCC 700345 / ANG-SQ1), this protein is N-succinylarginine dihydrolase.